The primary structure comprises 401 residues: Probable thioesterase FGSG_00047 (401 aa).

The tract at residues 379–401 (AREMDQRKRQKDFTHTTIHDKNS) is disordered.

This sequence belongs to the AMT4 thioesterase family.

Its pathway is mycotoxin biosynthesis. In terms of biological role, probable thioesterase; part of the gene cluster that mediates the biosynthesis of gramillins A and B, bicyclic lipopeptides that induce cell death in maize leaves but not in wheat leaves. The nonribosomal peptide synthetase GRA1 incorporates respectively a glutamic adic (Glu), a leucine (Leu), a serine (Ser), a hydroxyglutamine (HOGln), a 2-amino decanoic acid, and 2 cysteins (CysB and CysA). The biosynthesis of 2-amino decanoic acid incorporated in gramillins could be initiated by a fatty acid synthase composed of the alpha and beta subunits FGSG_00036 and FGSG_11656. The cytochrome P450 monooxygenase FGSG_15680 could hydroxylate the fatty acid chain. Subsequent oxidation to the ketone by the oxidoreductase FGSG_00048 and transamination by aminotransferase FGSG_00049 could form 2-amino-decanoic acid. On the other hand, FGSG_15680 could also be responsible for the HO-modified glutamine at the gamma-position. Whether hydroxylation occurs on the fully assembled product or on the Gln residue prior to assembly into the gramillins requires further proof. The thioredoxin FGSG_00043 could also be required for the disulfide-bond formation between CysA and CysB. The specific involvement of the remaining proteins from the cluster is more difficult to discern, but could have broader regulatory (FGSG_00040 and FGSG_11657) or enzymatic functions (FGSG_00044 and FGSG_00045). The final C-domain of GRA1 does not possess the expected sequence of a termination CT domain, often implicated in macrocyclization and release of a cyclopeptidein fungal NRPs; and the thioesterase FGSG_00047 may act in concert with the terminal C-domain of GRA1 to catalyze the formation of the macrocyclic anhydride and release of the products. In Gibberella zeae (strain ATCC MYA-4620 / CBS 123657 / FGSC 9075 / NRRL 31084 / PH-1) (Wheat head blight fungus), this protein is Probable thioesterase FGSG_00047.